The chain runs to 237 residues: UPF0174 protein YaaW (237 aa).

Belongs to the UPF0174 family.

This is UPF0174 protein YaaW from Escherichia coli O157:H7.